The following is a 245-amino-acid chain: tRNA (guanine-N(1)-)-methyltransferase (245 aa).

Residues glycine 111 and 130–135 (IGDYVL) contribute to the S-adenosyl-L-methionine site.

It belongs to the RNA methyltransferase TrmD family. As to quaternary structure, homodimer.

The protein resides in the cytoplasm. It catalyses the reaction guanosine(37) in tRNA + S-adenosyl-L-methionine = N(1)-methylguanosine(37) in tRNA + S-adenosyl-L-homocysteine + H(+). In terms of biological role, specifically methylates guanosine-37 in various tRNAs. This chain is tRNA (guanine-N(1)-)-methyltransferase, found in Dictyoglomus turgidum (strain DSM 6724 / Z-1310).